Here is a 617-residue protein sequence, read N- to C-terminus: Proline--tRNA ligase (617 aa).

It belongs to the class-II aminoacyl-tRNA synthetase family. ProS type 1 subfamily. As to quaternary structure, homodimer.

The protein localises to the cytoplasm. It catalyses the reaction tRNA(Pro) + L-proline + ATP = L-prolyl-tRNA(Pro) + AMP + diphosphate. In terms of biological role, catalyzes the attachment of proline to tRNA(Pro) in a two-step reaction: proline is first activated by ATP to form Pro-AMP and then transferred to the acceptor end of tRNA(Pro). As ProRS can inadvertently accommodate and process non-cognate amino acids such as alanine and cysteine, to avoid such errors it has two additional distinct editing activities against alanine. One activity is designated as 'pretransfer' editing and involves the tRNA(Pro)-independent hydrolysis of activated Ala-AMP. The other activity is designated 'posttransfer' editing and involves deacylation of mischarged Ala-tRNA(Pro). The misacylated Cys-tRNA(Pro) is not edited by ProRS. The protein is Proline--tRNA ligase of Treponema pallidum (strain Nichols).